Here is a 245-residue protein sequence, read N- to C-terminus: 5-oxoprolinase subunit A (245 aa).

This sequence belongs to the LamB/PxpA family. As to quaternary structure, forms a complex composed of PxpA, PxpB and PxpC.

The enzyme catalyses 5-oxo-L-proline + ATP + 2 H2O = L-glutamate + ADP + phosphate + H(+). Catalyzes the cleavage of 5-oxoproline to form L-glutamate coupled to the hydrolysis of ATP to ADP and inorganic phosphate. In Haemophilus influenzae (strain PittGG), this protein is 5-oxoprolinase subunit A.